Reading from the N-terminus, the 572-residue chain is Phospholipase B-like protein B (572 aa).

An N-terminal signal peptide occupies residues 1-28 (MNKLKSNFILNIVILFTILIFNINFINC). Asn-73, Asn-138, Asn-219, Asn-427, Asn-544, and Asn-564 each carry an N-linked (GlcNAc...) asparagine glycan.

This sequence belongs to the phospholipase B-like family.

Its subcellular location is the secreted. Its function is as follows. Probable phospholipase. In Dictyostelium discoideum (Social amoeba), this protein is Phospholipase B-like protein B (plbB).